The chain runs to 760 residues: MRPTPQRRAVATGALVAVTAMLAVGVQTTSANAGQDKAAHPAPRQSIHKPDPGAEPVKLTPSQRAELIRDANATKAETAKNLGLGAKEKLVVKDVVKDKNGTLHTRYERTYDGLPVLGGDLVVDATRSGQVKTAAKATKQRIAVASTTPSLAASAAEKDAVKAARAKGSKAGKADKAPRKVVWAAKGTPVLAYETVVGGVQDDGTPSQLHVITDAKTGKKLFEFQGVKQGTGNSQHSGQVQIGTTKSGSSYQMNDTTRGGHKTYNLNHGSSGTGTLFTDSDDVWGNGTNSDPATAGVDAHYGAQLTWDYYKNVHGRNGIRGDGVGAYSRVHYGNNYVNAFWDDSCFCMTYGDGNGIPLTSIDVAAHEMTHGVTSATANLTYSGESGGLNEATSDMMATAVEFWANNPADPGDYLIGEKININGDGTPLRYMDKPSKDGASKDAWYSGLGGIDVHYSSGPANHWFYLASEGSGPKDIGGVHYDSPTSDGLPVTGVGRDNAAKIWFKALTERMQSNTDYKGARDATLWAAGELFGVNSDTYNNVANAWAAINVGPRASSGVSVTSPGDQTSIVNQAVSLQIKATGSTSGALTYSATGLPAGLSINASTGLISGTPTTTGTSNVTVTVKDSAGKTGSTSFKWTVNTTGGGSVFENTTQVAIPDAGAAVTSPIVVTRSGNGPSALKVDVNITHTYRGDLTIDLVAPNGKTWRLKNSDAWDSAADVSETYTVDASSVSANGTWKLKVQDVYSGDSGTIDKWRLTF.

Positions 1-33 (MRPTPQRRAVATGALVAVTAMLAVGVQTTSANA) are cleaved as a signal peptide. Disordered stretches follow at residues 32-59 (NAGQ…PVKL) and 228-265 (KQGT…KTYN). A propeptide spanning residues 34-229 (GQDKAAHPAP…KLFEFQGVKQ (196 aa)) is cleaved from the precursor. Residues 228–257 (KQGTGNSQHSGQVQIGTTKSGSSYQMNDTT) show a composition bias toward polar residues. Zn(2+) is bound at residue His-366. Glu-367 is a catalytic residue. 2 residues coordinate Zn(2+): His-370 and Glu-390. The Proton donor role is filled by His-454. One can recognise a P/Homo B domain in the interval 640-760 (TVNTTGGGSV…GTIDKWRLTF (121 aa)).

Belongs to the peptidase M4 family. Zn(2+) serves as cofactor.

The protein localises to the secreted. Functionally, cleaves the N-terminal propeptide of transglutaminase thus activating it. This chain is Transglutaminase-activating metalloprotease, found in Streptomyces mobaraensis (Streptoverticillium mobaraense).